We begin with the raw amino-acid sequence, 230 residues long: Sugar fermentation stimulation protein homolog (230 aa).

It belongs to the SfsA family.

The protein is Sugar fermentation stimulation protein homolog of Caldivirga maquilingensis (strain ATCC 700844 / DSM 13496 / JCM 10307 / IC-167).